A 1124-amino-acid polypeptide reads, in one-letter code: uncharacterized protein (1124 aa).

The N-terminal stretch at 1–28 (MALFPRSILIALVLSFVLNLGLVTKIHA) is a signal peptide. Transmembrane regions (helical) follow at residues 332–352 (IVTAFLTLYVMFFGFKLLLAG), 359–379 (EYINFILKIIFVTYFSIGINI), 393–413 (MIQWAFPFLLNGINGLASWVM), 495–515 (MLVSLALSYPLLVISVAAFMV), 522–542 (MISIVILGILAPLFVPMFLFA), 555–575 (MISFLLQPMVVVTFMITMFAV), and 700–720 (IKNILLALVTACFTLYLMYNF).

This sequence belongs to the TrbL/VirB6 family.

It is found in the cell membrane. This is an uncharacterized protein from Rickettsia prowazekii (strain Madrid E).